Here is a 117-residue protein sequence, read N- to C-terminus: UPF0344 protein GTNG_0604 (117 aa).

Helical transmembrane passes span 1–21 (MTHAHITSWFIMIILFLIAVS), 39–59 (LFYIITIITGLLLLHSIASIS), 61–81 (LYWLKALAGLWVIGAMEMVLV), and 97–117 (VIALVVTLFLGLLLPLGFDLF).

This sequence belongs to the UPF0344 family.

It localises to the cell membrane. The sequence is that of UPF0344 protein GTNG_0604 from Geobacillus thermodenitrificans (strain NG80-2).